We begin with the raw amino-acid sequence, 284 residues long: Bifunctional protein FolD (284 aa).

Residues 165–167 (GRS) and Ser-190 contribute to the NADP(+) site.

It belongs to the tetrahydrofolate dehydrogenase/cyclohydrolase family. In terms of assembly, homodimer.

It carries out the reaction (6R)-5,10-methylene-5,6,7,8-tetrahydrofolate + NADP(+) = (6R)-5,10-methenyltetrahydrofolate + NADPH. The catalysed reaction is (6R)-5,10-methenyltetrahydrofolate + H2O = (6R)-10-formyltetrahydrofolate + H(+). It participates in one-carbon metabolism; tetrahydrofolate interconversion. Its function is as follows. Catalyzes the oxidation of 5,10-methylenetetrahydrofolate to 5,10-methenyltetrahydrofolate and then the hydrolysis of 5,10-methenyltetrahydrofolate to 10-formyltetrahydrofolate. This Streptococcus gordonii (strain Challis / ATCC 35105 / BCRC 15272 / CH1 / DL1 / V288) protein is Bifunctional protein FolD.